A 212-amino-acid polypeptide reads, in one-letter code: Large ribosomal subunit protein uL3 (212 aa).

The segment at 134–155 is disordered; that stretch reads RNSHGNSLSHRAPGSIGQNQSP. An N5-methylglutamine modification is found at Q153.

The protein belongs to the universal ribosomal protein uL3 family. Part of the 50S ribosomal subunit. Forms a cluster with proteins L14 and L19. Post-translationally, methylated by PrmB.

One of the primary rRNA binding proteins, it binds directly near the 3'-end of the 23S rRNA, where it nucleates assembly of the 50S subunit. The polypeptide is Large ribosomal subunit protein uL3 (Pseudoalteromonas atlantica (strain T6c / ATCC BAA-1087)).